The following is a 386-amino-acid chain: 3-ketosteroid-9-alpha-monooxygenase, oxygenase component (386 aa).

One can recognise a Rieske domain in the interval W26 to V128. [2Fe-2S] cluster contacts are provided by C67, H69, C86, and H89. 4 residues coordinate Fe cation: N175, H181, H186, and D304.

Homotrimer. The two-component system 3-ketosteroid-9-alpha-monooxygenase is composed of an oxygenase component KshA and a reductase component KshB. The cofactor is [2Fe-2S] cluster. Fe cation serves as cofactor.

It catalyses the reaction androsta-1,4-diene-3,17-dione + 2 reduced [2Fe-2S]-[ferredoxin] + O2 + 2 H(+) = 9alpha-hydroxyandrosta-1,4-diene-3,17-dione + 2 oxidized [2Fe-2S]-[ferredoxin] + H2O. The catalysed reaction is androst-4-ene-3,17-dione + NADH + O2 + H(+) = 9alpha-hydroxy-androst-4-ene-3,17-dione + NAD(+) + H2O. It carries out the reaction 3-oxochol-4-en-22-oate + NADH + O2 + H(+) = 9alpha-hydroxy-3-oxochol-4-en-22-oate + NAD(+) + H2O. The enzyme catalyses 3-oxochola-1,4-dien-22-oate + NADH + O2 + H(+) = 9alpha-hydroxy-3-oxochola-1,4-dien-22-oate + NAD(+) + H2O. It catalyses the reaction 3-oxochol-4-en-22-oyl-CoA + NADH + O2 + H(+) = 9alpha-hydroxy-3-oxochol-4-en-22-oyl-CoA + NAD(+) + H2O. The catalysed reaction is 3-oxochola-1,4-dien-22-oyl-CoA + NADH + O2 + H(+) = 9alpha-hydroxy-3-oxochola-1,4-dien-22-oyl-CoA + NAD(+) + H2O. It participates in lipid metabolism; steroid biosynthesis. In terms of biological role, involved in the degradation of cholesterol. Catalyzes the introduction of a 9a-hydroxyl moiety into 1,4-androstadiene-3,17-dione (ADD) to yield the 9alpha-hydroxy-1,4-androstadiene-3,17-dione (9OHADD) intermediate which spontaneously form 3-hydroxy-9,10-seconandrost-1,3,5(10)-triene-9,17-dione (HSA) via the meta-cleavage of ring B with concomitant aromatization of ring A. KSH is also able to use 4-androstene-3,17-dione (AD), 3-oxo-23,24-bisnorcholesta-4-en-22-oate (4-BNC), 3-oxo-23,24-bisnorcholesta-1,4-dien-22-oate (1,4-BNC), 3-oxo-23,24-bisnorcholesta-4-en-22-oyl-coenzyme A thioester (4-BNC-CoA) and 3-oxo-23,24-bisnorcholesta-1,4-dien-22-oyl-coenzyme A thioester (1,4-BNC-CoA) as substrates. The protein is 3-ketosteroid-9-alpha-monooxygenase, oxygenase component (kshA) of Mycobacterium tuberculosis (strain ATCC 25618 / H37Rv).